The primary structure comprises 543 residues: Bifunctional purine biosynthesis protein PurH (543 aa).

Positions 5-151 (NHARPIRRAL…KNHKDVTIVV (147 aa)) constitute an MGS-like domain.

This sequence belongs to the PurH family.

It carries out the reaction (6R)-10-formyltetrahydrofolate + 5-amino-1-(5-phospho-beta-D-ribosyl)imidazole-4-carboxamide = 5-formamido-1-(5-phospho-D-ribosyl)imidazole-4-carboxamide + (6S)-5,6,7,8-tetrahydrofolate. It catalyses the reaction IMP + H2O = 5-formamido-1-(5-phospho-D-ribosyl)imidazole-4-carboxamide. The protein operates within purine metabolism; IMP biosynthesis via de novo pathway; 5-formamido-1-(5-phospho-D-ribosyl)imidazole-4-carboxamide from 5-amino-1-(5-phospho-D-ribosyl)imidazole-4-carboxamide (10-formyl THF route): step 1/1. It functions in the pathway purine metabolism; IMP biosynthesis via de novo pathway; IMP from 5-formamido-1-(5-phospho-D-ribosyl)imidazole-4-carboxamide: step 1/1. The protein is Bifunctional purine biosynthesis protein PurH of Shewanella oneidensis (strain ATCC 700550 / JCM 31522 / CIP 106686 / LMG 19005 / NCIMB 14063 / MR-1).